Here is a 400-residue protein sequence, read N- to C-terminus: Acetate kinase (400 aa).

Position 10 (N10) interacts with Mg(2+). Residue K17 coordinates ATP. Residue R91 participates in substrate binding. Residue D150 is the Proton donor/acceptor of the active site. ATP is bound by residues 210–214 (HLGNG), 285–287 (DCR), and 333–337 (GIGEN). E387 lines the Mg(2+) pocket.

It belongs to the acetokinase family. In terms of assembly, homodimer. Mg(2+) is required as a cofactor. It depends on Mn(2+) as a cofactor.

The protein localises to the cytoplasm. The catalysed reaction is acetate + ATP = acetyl phosphate + ADP. It participates in metabolic intermediate biosynthesis; acetyl-CoA biosynthesis; acetyl-CoA from acetate: step 1/2. In terms of biological role, catalyzes the formation of acetyl phosphate from acetate and ATP. Can also catalyze the reverse reaction. This is Acetate kinase from Proteus mirabilis (strain HI4320).